The primary structure comprises 1969 residues: Protein mono-ADP-ribosyltransferase PARP4 (1969 aa).

One can recognise a BRCT domain in the interval 1–94 (MTLGIFANCI…RLLDVRNYDP (94 aa)). Positions 19–25 (PRQQKKK) match the Nuclear localization signal motif. Residues 92–132 (YDPLSPAPAAPPAERSRSEVQSEYLPSDNTPEKENTEVTEV) are disordered. A PARP alpha-helical domain is found at 235–363 (SEKLQALLLE…ETNLSKPNPP (129 aa)). One can recognise a PARP catalytic domain in the interval 362-566 (PPSLAKYRAL…FCTPGDQIKE (205 aa)). Positions 600-728 (TNIKAGLQDA…KVLIKITYIT (129 aa)) constitute a VIT domain. The region spanning 869 to 1039 (EVIICLDCSS…KQIEAQMTRI (171 aa)) is the VWFA domain. Ser-1229 is subject to Phosphoserine. The Nuclear localization signal signature appears at 1230–1242 (DGHGVLQPVSVSS). Composition is skewed to pro residues over residues 1372 to 1387 (PPHPLGGTHPPPPLPL), 1402 to 1417 (HPPPPLFGGTLIPPPS), 1425 to 1444 (LPPPPPLPGGTHIPPPPPIP), 1485 to 1513 (LPPPPLLPAGTHIPPPPPITGSTHPPPPS), and 1521 to 1540 (LPPPPPLPGGTHIPPPPPIP). Residues 1372-1608 (PPHPLGGTHP…AGTQFSLSPI (237 aa)) are disordered. The region spanning 1443 to 1541 (IPGGTLIPPS…HIPPPPPIPG (99 aa)) is the FH1 domain. Low complexity predominate over residues 1541–1556 (GGTLIPSPSSLFGGTH). Positions 1557 to 1585 (LPPPPLLPAGTHIPPPPPITGSTHPPPPS) are enriched in pro residues. Positions 1808–1969 (FCDEDQESPV…LHRILYYSQG (162 aa)) are interaction with the major vault protein.

The protein belongs to the ARTD/PARP family. In terms of assembly, component of the vault ribonucleoprotein particle, at least composed of MVP, PARP4 and one or more vault RNAs (vRNAs). Interacts with TEP1.

It localises to the cytoplasm. The protein localises to the nucleus. The catalysed reaction is L-aspartyl-[protein] + NAD(+) = 4-O-(ADP-D-ribosyl)-L-aspartyl-[protein] + nicotinamide. It catalyses the reaction L-glutamyl-[protein] + NAD(+) = 5-O-(ADP-D-ribosyl)-L-glutamyl-[protein] + nicotinamide. In terms of biological role, mono-ADP-ribosyltransferase that mediates mono-ADP-ribosylation of target proteins. In Mus musculus (Mouse), this protein is Protein mono-ADP-ribosyltransferase PARP4.